Here is a 229-residue protein sequence, read N- to C-terminus: Lantibiotic transport ATP-binding protein SrtF (229 aa).

The ABC transporter domain occupies 2 to 225 (LKIQNLKKSY…EELFNNQILF (224 aa)). 34 to 41 (GPNGAGKS) contacts ATP.

It belongs to the ABC transporter superfamily.

In terms of biological role, implicated in the export process of the lantibiotic SrtA. The sequence is that of Lantibiotic transport ATP-binding protein SrtF (srtF) from Streptococcus pyogenes serotype M1.